Consider the following 259-residue polypeptide: Adenosylcobinamide-GDP ribazoletransferase (259 aa).

The next 6 helical transmembrane spans lie at 37–57 (ASRYFGLVGTLIGVLSALVYS), 58–78 (VMLHWVSPSIAIIFAMIASVL), 118–138 (ALALVLCLLLKWQLLSELALF), 143–163 (VSLALILGHTLSRVVAASFIF), 195–215 (AAISLLLISFMQALVLILGLL), and 237–257 (LGATQQIAEVVCYLLLLIVGA).

Belongs to the CobS family. The cofactor is Mg(2+).

It is found in the cell inner membrane. It carries out the reaction alpha-ribazole + adenosylcob(III)inamide-GDP = adenosylcob(III)alamin + GMP + H(+). It catalyses the reaction alpha-ribazole 5'-phosphate + adenosylcob(III)inamide-GDP = adenosylcob(III)alamin 5'-phosphate + GMP + H(+). The protein operates within cofactor biosynthesis; adenosylcobalamin biosynthesis; adenosylcobalamin from cob(II)yrinate a,c-diamide: step 7/7. Joins adenosylcobinamide-GDP and alpha-ribazole to generate adenosylcobalamin (Ado-cobalamin). Also synthesizes adenosylcobalamin 5'-phosphate from adenosylcobinamide-GDP and alpha-ribazole 5'-phosphate. This Shewanella piezotolerans (strain WP3 / JCM 13877) protein is Adenosylcobinamide-GDP ribazoletransferase.